A 134-amino-acid polypeptide reads, in one-letter code: D-ribose pyranase (134 aa).

Catalysis depends on His20, which acts as the Proton donor. Substrate contacts are provided by residues Asp28, His101, and 123-125; that span reads YSN.

This sequence belongs to the RbsD / FucU family. RbsD subfamily. Homodecamer.

The protein localises to the cytoplasm. The enzyme catalyses beta-D-ribopyranose = beta-D-ribofuranose. Its pathway is carbohydrate metabolism; D-ribose degradation; D-ribose 5-phosphate from beta-D-ribopyranose: step 1/2. Its function is as follows. Catalyzes the interconversion of beta-pyran and beta-furan forms of D-ribose. This chain is D-ribose pyranase, found in Pseudomonas syringae pv. syringae (strain B728a).